Consider the following 233-residue polypeptide: Lipoprotein-releasing system ATP-binding protein LolD (233 aa).

Residues 6–233 (LQCDNLCKRY…TAELSLMGAE (228 aa)) enclose the ABC transporter domain. Residue 42–49 (GSSGSGKS) participates in ATP binding.

The protein belongs to the ABC transporter superfamily. Lipoprotein translocase (TC 3.A.1.125) family. In terms of assembly, the complex is composed of two ATP-binding proteins (LolD) and two transmembrane proteins (LolC and LolE).

Its subcellular location is the cell inner membrane. Part of the ABC transporter complex LolCDE involved in the translocation of mature outer membrane-directed lipoproteins, from the inner membrane to the periplasmic chaperone, LolA. Responsible for the formation of the LolA-lipoprotein complex in an ATP-dependent manner. This is Lipoprotein-releasing system ATP-binding protein LolD from Escherichia coli O6:K15:H31 (strain 536 / UPEC).